Consider the following 128-residue polypeptide: Iron-sulfur cluster insertion protein ErpA (128 aa).

Iron-sulfur cluster-binding residues include Cys56, Cys120, and Cys122.

The protein belongs to the HesB/IscA family. As to quaternary structure, homodimer. Iron-sulfur cluster serves as cofactor.

Its function is as follows. Required for insertion of 4Fe-4S clusters for at least IspG. The sequence is that of Iron-sulfur cluster insertion protein ErpA from Xanthomonas oryzae pv. oryzae (strain MAFF 311018).